The primary structure comprises 444 residues: tRNA modification GTPase MnmE (444 aa).

R24, E81, and K121 together coordinate (6S)-5-formyl-5,6,7,8-tetrahydrofolate. In terms of domain architecture, TrmE-type G spans 218-368 (GLTVVIAGPP…LLDALVGFAR (151 aa)). GTP-binding positions include 228–233 (NAGKST), 247–253 (SPQAGTT), 272–275 (DTAG), and 349–351 (SAR). Residues S232 and T253 each contribute to the Mg(2+) site. Residue K444 coordinates (6S)-5-formyl-5,6,7,8-tetrahydrofolate.

It belongs to the TRAFAC class TrmE-Era-EngA-EngB-Septin-like GTPase superfamily. TrmE GTPase family. As to quaternary structure, homodimer. Heterotetramer of two MnmE and two MnmG subunits. Requires K(+) as cofactor.

It localises to the cytoplasm. In terms of biological role, exhibits a very high intrinsic GTPase hydrolysis rate. Involved in the addition of a carboxymethylaminomethyl (cmnm) group at the wobble position (U34) of certain tRNAs, forming tRNA-cmnm(5)s(2)U34. The protein is tRNA modification GTPase MnmE of Bradyrhizobium sp. (strain ORS 278).